The sequence spans 415 residues: Serine/threonine transporter SstT (415 aa).

8 consecutive transmembrane segments (helical) span residues 23–43 (ILIG…AAIA), 47–67 (LGTL…LMLV), 85–105 (ILFL…LFSF), 144–164 (ALLN…GFAL), 181–201 (AVTF…FGLV), 220–240 (LLVL…LLVF), 293–313 (IPLG…VLTL), and 333–353 (VVAS…LLLI).

The protein belongs to the dicarboxylate/amino acid:cation symporter (DAACS) (TC 2.A.23) family.

The protein localises to the cell inner membrane. It carries out the reaction L-serine(in) + Na(+)(in) = L-serine(out) + Na(+)(out). The catalysed reaction is L-threonine(in) + Na(+)(in) = L-threonine(out) + Na(+)(out). Involved in the import of serine and threonine into the cell, with the concomitant import of sodium (symport system). In Klebsiella pneumoniae (strain 342), this protein is Serine/threonine transporter SstT.